The chain runs to 298 residues: Probable phosphite transport system-binding protein HtxB (298 aa).

A signal peptide spans 1–33; the sequence is MQVFTLFSKFKKALTRAILAFIATIIVCTPAQA.

It belongs to the phosphate/phosphite/phosphonate binding protein family.

Probably forms part of a binding-protein-dependent hypophosphite transporter. The polypeptide is Probable phosphite transport system-binding protein HtxB (htxB) (Stutzerimonas stutzeri (Pseudomonas stutzeri)).